The sequence spans 523 residues: Probable E3 ubiquitin-protein ligase ZFP1 (523 aa).

Residues 18–28 show a composition bias toward basic and acidic residues; the sequence is EQGHSHIHSES. Positions 18–43 are disordered; that stretch reads EQGHSHIHSESFNRTGNDSSDQGAQH. The span at 29–40 shows a compositional bias: polar residues; that stretch reads FNRTGNDSSDQG. Residues 471–512 form an RING-type; atypical zinc finger; that stretch reads CIICQEEYQVKECIGTLDCGHRYHEDCIKQWLMVKNLCPICK.

This sequence belongs to the RING-type zinc finger family. As to quaternary structure, interacts with DJA6.

It catalyses the reaction S-ubiquitinyl-[E2 ubiquitin-conjugating enzyme]-L-cysteine + [acceptor protein]-L-lysine = [E2 ubiquitin-conjugating enzyme]-L-cysteine + N(6)-ubiquitinyl-[acceptor protein]-L-lysine.. Its pathway is protein modification; protein ubiquitination. Probable E3 ubiquitin-protein ligase. The chain is Probable E3 ubiquitin-protein ligase ZFP1 from Oryza sativa subsp. japonica (Rice).